Consider the following 378-residue polypeptide: CST complex subunit STN1 (378 aa).

Positions 8–195 (MECESSPREE…KVYDQPFRNP (188 aa)) are interaction with CTC1. The OB DNA-binding region spans 64-165 (VDIMGAVISV…EICANIYYKV (102 aa)). Winged helix-turn-helix (wHTH) regions lie at residues 201-305 (EALN…YVTT) and 306-378 (KDKD…YAAF).

It belongs to the STN1 family. Component of the CST complex, composed of TEN1/C17orf106, CTC1/C17orf68 and STN1; in the complex interacts directly with TEN1 and CTC1. Interacts with ACD/TPP1. Interacts with POT1 and POLA1.

It localises to the nucleus. The protein localises to the chromosome. Its subcellular location is the telomere. Component of the CST complex proposed to act as a specialized replication factor promoting DNA replication under conditions of replication stress or natural replication barriers such as the telomere duplex. The CST complex binds single-stranded DNA with high affinity in a sequence-independent manner, while isolated subunits bind DNA with low affinity by themselves. Initially the CST complex has been proposed to protect telomeres from DNA degradation. However, the CST complex has been shown to be involved in several aspects of telomere replication. The CST complex inhibits telomerase and is involved in telomere length homeostasis; it is proposed to bind to newly telomerase-synthesized 3' overhangs and to terminate telomerase action implicating the association with the ACD:POT1 complex thus interfering with its telomerase stimulation activity. The CST complex is also proposed to be involved in fill-in synthesis of the telomeric C-strand probably implicating recruitment and activation of DNA polymerase alpha. The CST complex facilitates recovery from many forms of exogenous DNA damage; seems to be involved in the re-initiation of DNA replication at repaired forks and/or dormant origins. Required for efficicient replication of the duplex region of the telomere. Promotes efficient replication of lagging-strand telomeres. Promotes general replication start following replication-fork stalling implicating new origin firing. May be in involved in C-strand fill-in during late S/G2 phase independent of its role in telomere duplex replication. This chain is CST complex subunit STN1, found in Mus musculus (Mouse).